A 142-amino-acid chain; its full sequence is Putative 2'-deoxynucleoside 5'-phosphate N-hydrolase 1 (142 aa).

Substrate is bound by residues Phe-4–Arg-10, Tyr-19, His-36, Glu-82, and Ser-106–Met-108.

Belongs to the 2'-deoxynucleoside 5'-phosphate N-hydrolase 1 family. As to quaternary structure, monomer and homodimer.

The enzyme catalyses a pyrimidine 2'-deoxyribonucleoside 5'-phosphate + H2O = a pyrimidine nucleobase + 2-deoxy-D-ribose 5-phosphate. The catalysed reaction is a purine 2'-deoxyribonucleoside 5'-phosphate + H2O = a purine nucleobase + 2-deoxy-D-ribose 5-phosphate. Its function is as follows. Catalyzes the cleavage of the N-glycosidic bond of deoxyribonucleoside 5'-monophosphates to yield deoxyribose 5-phosphate and a purine or pyrimidine base. The sequence is that of Putative 2'-deoxynucleoside 5'-phosphate N-hydrolase 1 from Syntrophotalea carbinolica (strain DSM 2380 / NBRC 103641 / GraBd1) (Pelobacter carbinolicus).